The primary structure comprises 330 residues: 3',5'-cyclic-nucleotide phosphodiesterase (330 aa).

The first 22 residues, 1–22 (MFKNKLAVLFTCLSVFSFSAQS), serve as a signal peptide directing secretion.

Belongs to the cyclic nucleotide phosphodiesterase class-II family.

The protein localises to the periplasm. The enzyme catalyses a nucleoside 3',5'-cyclic phosphate + H2O = a nucleoside 5'-phosphate + H(+). Seems to allow the organism to grow on cAMP. The protein is 3',5'-cyclic-nucleotide phosphodiesterase (cpdP) of Aliivibrio fischeri (Vibrio fischeri).